The primary structure comprises 461 residues: Argininosuccinate lyase (461 aa).

Belongs to the lyase 1 family. Argininosuccinate lyase subfamily.

It is found in the cytoplasm. The enzyme catalyses 2-(N(omega)-L-arginino)succinate = fumarate + L-arginine. The protein operates within amino-acid biosynthesis; L-arginine biosynthesis; L-arginine from L-ornithine and carbamoyl phosphate: step 3/3. This Dehalococcoides mccartyi (strain ATCC BAA-2266 / KCTC 15142 / 195) (Dehalococcoides ethenogenes (strain 195)) protein is Argininosuccinate lyase.